The chain runs to 257 residues: UPF0246 protein Sbal223_3241 (257 aa).

This sequence belongs to the UPF0246 family.

This Shewanella baltica (strain OS223) protein is UPF0246 protein Sbal223_3241.